The sequence spans 308 residues: KH domain-containing protein At4g26480 (308 aa).

The segment at 1–26 is disordered; the sequence is MMMMTSLGGGAGGGGGGGGSGGGRFV. Over residues 7-24 the composition is skewed to gly residues; it reads LGGGAGGGGGGGGSGGGR. Residues 165–232 form the KH domain; the sequence is DIPVDKYPNY…EHLNEPLHIL (68 aa). The interval 284–308 is disordered; it reads EEGSPMSGSISPYNSLGMKRAKTRG. Position 294 is a phosphoserine (Ser-294).

It localises to the nucleus. The sequence is that of KH domain-containing protein At4g26480 from Arabidopsis thaliana (Mouse-ear cress).